We begin with the raw amino-acid sequence, 79 residues long: RNA-binding protein Hfq (79 aa).

The region spanning 10-70 (DVFLNTVRKQ…ISTIMPGQPV (61 aa)) is the Sm domain.

Belongs to the Hfq family. In terms of assembly, homohexamer.

In terms of biological role, RNA chaperone that binds small regulatory RNA (sRNAs) and mRNAs to facilitate mRNA translational regulation in response to envelope stress, environmental stress and changes in metabolite concentrations. Also binds with high specificity to tRNAs. This Bartonella henselae (strain ATCC 49882 / DSM 28221 / CCUG 30454 / Houston 1) (Rochalimaea henselae) protein is RNA-binding protein Hfq.